The sequence spans 615 residues: Dihydroxy-acid dehydratase (615 aa).

D81 serves as a coordination point for Mg(2+). [2Fe-2S] cluster is bound at residue C122. 2 residues coordinate Mg(2+): D123 and K124. K124 bears the N6-carboxylysine mark. Residue C195 coordinates [2Fe-2S] cluster. E491 contributes to the Mg(2+) binding site. S517 (proton acceptor) is an active-site residue.

It belongs to the IlvD/Edd family. Homodimer. [2Fe-2S] cluster is required as a cofactor. It depends on Mg(2+) as a cofactor.

It carries out the reaction (2R)-2,3-dihydroxy-3-methylbutanoate = 3-methyl-2-oxobutanoate + H2O. It catalyses the reaction (2R,3R)-2,3-dihydroxy-3-methylpentanoate = (S)-3-methyl-2-oxopentanoate + H2O. It functions in the pathway amino-acid biosynthesis; L-isoleucine biosynthesis; L-isoleucine from 2-oxobutanoate: step 3/4. Its pathway is amino-acid biosynthesis; L-valine biosynthesis; L-valine from pyruvate: step 3/4. Functionally, functions in the biosynthesis of branched-chain amino acids. Catalyzes the dehydration of (2R,3R)-2,3-dihydroxy-3-methylpentanoate (2,3-dihydroxy-3-methylvalerate) into 2-oxo-3-methylpentanoate (2-oxo-3-methylvalerate) and of (2R)-2,3-dihydroxy-3-methylbutanoate (2,3-dihydroxyisovalerate) into 2-oxo-3-methylbutanoate (2-oxoisovalerate), the penultimate precursor to L-isoleucine and L-valine, respectively. The polypeptide is Dihydroxy-acid dehydratase (Shewanella piezotolerans (strain WP3 / JCM 13877)).